We begin with the raw amino-acid sequence, 508 residues long: Pentatricopeptide repeat-containing protein At5g48730, chloroplastic (508 aa).

The segment covering Met-1–His-10 has biased composition (polar residues). Residues Met-1–Glu-22 are disordered. The N-terminal 28 residues, Met-1–Arg-28, are a transit peptide targeting the chloroplast. PPR repeat units follow at residues Asn-149–Val-183, Asn-184–Ser-214, Asp-220–Pro-254, Asn-255–Pro-290, Asp-291–Pro-325, Asn-326–Trp-360, Thr-361–Pro-395, Ser-396–Leu-430, Asp-431–Pro-465, and Asp-466–Gln-500.

It belongs to the PPR family. P subfamily.

The protein resides in the plastid. It is found in the chloroplast. The chain is Pentatricopeptide repeat-containing protein At5g48730, chloroplastic from Arabidopsis thaliana (Mouse-ear cress).